A 165-amino-acid polypeptide reads, in one-letter code: C-phycoerythrin class 2 subunit alpha (165 aa).

Cys75 serves as a coordination point for phycourobilin. Residues Cys83 and Cys140 each coordinate (2R,3E)-phycoerythrobilin.

Belongs to the phycobiliprotein family. Heterodimer of an alpha and a beta chain. Contains two covalently linked phycoerythrobilin chromophores and one covalently linked phycourobilin chromophore.

It is found in the cellular thylakoid membrane. Light-harvesting photosynthetic bile pigment-protein from the phycobiliprotein complex. The polypeptide is C-phycoerythrin class 2 subunit alpha (mpeA) (Synechococcus sp. (strain WH8020)).